Here is a 241-residue protein sequence, read N- to C-terminus: Probable pectate lyase D (241 aa).

The first 17 residues, methionine 1 to alanine 17, serve as a signal peptide directing secretion. The N-linked (GlcNAc...) asparagine glycan is linked to asparagine 215. The interval asparagine 215 to cysteine 241 is disordered.

Belongs to the polysaccharide lyase 3 family. Ca(2+) is required as a cofactor.

It is found in the secreted. It carries out the reaction Eliminative cleavage of (1-&gt;4)-alpha-D-galacturonan to give oligosaccharides with 4-deoxy-alpha-D-galact-4-enuronosyl groups at their non-reducing ends.. Its function is as follows. Pectinolytic enzyme consist of four classes of enzymes: pectin lyase, polygalacturonase, pectin methylesterase and rhamnogalacturonase. Among pectinolytic enzymes, pectin lyase is the most important in depolymerization of pectin, since it cleaves internal glycosidic bonds of highly methylated pectins. Favors pectate, the anion, over pectin, the methyl ester. The polypeptide is Probable pectate lyase D (plyD) (Neosartorya fischeri (strain ATCC 1020 / DSM 3700 / CBS 544.65 / FGSC A1164 / JCM 1740 / NRRL 181 / WB 181) (Aspergillus fischerianus)).